Reading from the N-terminus, the 335-residue chain is Dihydroorotate dehydrogenase (quinone) (335 aa).

FMN-binding positions include 58 to 62 (AGADK) and Thr82. Lys62 contributes to the substrate binding site. 107-111 (NRNGF) provides a ligand contact to substrate. The FMN site is built by Asn135 and Asn168. Asn168 provides a ligand contact to substrate. Ser171 (nucleophile) is an active-site residue. Asn173 contributes to the substrate binding site. Positions 213 and 241 each coordinate FMN. 242-243 (NT) contacts substrate. FMN is bound by residues Gly264, Gly293, and 314-315 (YS).

It belongs to the dihydroorotate dehydrogenase family. Type 2 subfamily. Monomer. FMN is required as a cofactor.

It localises to the cell membrane. It carries out the reaction (S)-dihydroorotate + a quinone = orotate + a quinol. The protein operates within pyrimidine metabolism; UMP biosynthesis via de novo pathway; orotate from (S)-dihydroorotate (quinone route): step 1/1. Functionally, catalyzes the conversion of dihydroorotate to orotate with quinone as electron acceptor. This chain is Dihydroorotate dehydrogenase (quinone), found in Haemophilus ducreyi (strain 35000HP / ATCC 700724).